The chain runs to 343 residues: Endoplasmic reticulum-resident calcium binding protein (343 aa).

Positions 1–26 are cleaved as a signal peptide; sequence MMKINLYKLLCFICVIFLLHKNVVRS. 5 consecutive EF-hand domains span residues 59-94, 95-130, 135-170, 172-207, and 210-245; these read GAKE…LKNE, IFLK…NLDA, KHSE…MKDE, LKEL…ESSG, and KDDE…PAHE. Ca(2+)-binding residues include aspartate 72, asparagine 74, aspartate 76, glutamate 78, glutamate 83, aspartate 108, aspartate 110, aspartate 112, glutamate 119, aspartate 148, aspartate 150, aspartate 152, lysine 154, glutamate 159, aspartate 185, asparagine 187, aspartate 189, lysine 191, glutamate 196, aspartate 223, asparagine 225, aspartate 227, and glutamate 234. Acidic residues predominate over residues 313–331; it reads EDDDMDADNTEDDKDEADD. Residues 313 to 343 form a disordered region; it reads EDDDMDADNTEDDKDEADDASQQKSPAIDEL.

The protein belongs to the CREC family.

It is found in the endoplasmic reticulum. Functionally, calcium-binding protein. Required for schizont to ring transition. Required for the breakdown of the parasitophorous vacuole membrane during egress. Required for the proteolytic maturation of apical membrane antigen 1 (AMA-1) during egress. Required for the proteolytic maturation of subtilisin-like protease 1 (SUB1) during egress. Required for the proteolytic maturation of plasmepsin X (PMX) during egress. The polypeptide is Endoplasmic reticulum-resident calcium binding protein (Plasmodium falciparum (isolate 3D7)).